Consider the following 415-residue polypeptide: Probable RAD2-like endonuclease 369L (415 aa).

An N-domain region spans residues 1–114; sequence MGIKNLTKFI…EDVKKKTLSL (114 aa). Residues aspartate 34, glutamate 86, glutamate 198, glutamate 200, aspartate 219, aspartate 221, and aspartate 277 each coordinate Mg(2+). The interval 163-297 is I-domain; that stretch reads VKQRHRYDIR…VKSYELIKVQ (135 aa).

This sequence belongs to the XPG/RAD2 endonuclease family. Requires Mg(2+) as cofactor.

It is found in the host nucleus. In terms of biological role, probable endonuclease. The chain is Probable RAD2-like endonuclease 369L from Acheta domesticus (House cricket).